Reading from the N-terminus, the 356-residue chain is MGSKDNAISNDSALVLSLLLLLLLPLLHEAAEGCDMFTGRWVKDDSYPLYNSSTCPFIRHEFSCQRNGRPDLDYSTFRWQPLSCKLARFNGLQFLKKNKGKKIMFVGDSLSLNQWQSLACMLHSSVPNSTYTLTTQGSISTYTFKEYGLELKLDRNVYLVDIVREKIGRVLKLDSINDGKNWVEMDTLIFNTWHWWSRRGPAQPWDLIQIGTNVTKDMDRVAAFEIALGTWGKWVDTVLNTKKTRVFFQGISPSHYKGVLWGEPAAKSCVGQKEPLLGTKYPGGLPAEVGVLKRALGKISKPVTLLDITMLSLLRKDAHPSVYGLGGRNSSGDCSHWCLSGVPDTWNEILYNYMVE.

The chain crosses the membrane as a helical; Signal-anchor for type II membrane protein span at residues 12-31 (SALVLSLLLLLLLPLLHEAA). A GDS motif motif is present at residues 107 to 109 (GDS). The DCXHWCLPGXXDXWN motif signature appears at 333 to 347 (DCSHWCLSGVPDTWN).

Belongs to the PC-esterase family. TBL subfamily.

The protein resides in the membrane. Functionally, may act as a bridging protein that binds pectin and other cell wall polysaccharides. Probably involved in maintaining esterification of pectins. May be involved in the specific O-acetylation of cell wall polymers. The protein is Protein trichome birefringence-like 41 (TBL41) of Arabidopsis thaliana (Mouse-ear cress).